Reading from the N-terminus, the 147-residue chain is Cytochrome c-type biogenesis protein CcmE (147 aa).

Residues 1-7 (MTRKQKR) lie on the Cytoplasmic side of the membrane. Residues 8-28 (LSVIVGGLAFLGAATGLTFYA) traverse the membrane as a helical; Signal-anchor for type II membrane protein segment. Residues 29–147 (LGQKASYFYM…KGVWQESKSE (119 aa)) lie on the Periplasmic side of the membrane. 2 residues coordinate heme: histidine 122 and tyrosine 126.

This sequence belongs to the CcmE/CycJ family.

The protein resides in the cell inner membrane. Its function is as follows. Heme chaperone required for the biogenesis of c-type cytochromes. Transiently binds heme delivered by CcmC and transfers the heme to apo-cytochromes in a process facilitated by CcmF and CcmH. The sequence is that of Cytochrome c-type biogenesis protein CcmE from Mesorhizobium japonicum (strain LMG 29417 / CECT 9101 / MAFF 303099) (Mesorhizobium loti (strain MAFF 303099)).